Here is a 203-residue protein sequence, read N- to C-terminus: GTP-binding protein rho4 (203 aa).

21–28 (GDGGCGKT) provides a ligand contact to GTP. Residues 43–51 (YVPTVFENY) carry the Effector region motif. GTP is bound at residue 70-74 (DTAGQ). C200 bears the Cysteine methyl ester mark. C200 carries the S-geranylgeranyl cysteine lipid modification. Residues 201–203 (VIL) constitute a propeptide, removed in mature form.

The protein belongs to the small GTPase superfamily. Rho family.

The protein resides in the membrane. Its function is as follows. Required for cell separation. Involved in the regulation of the septum degradation during cytokinesis and in the organization of F-actin patches and cytoplasmic microtubules. The polypeptide is GTP-binding protein rho4 (rho4) (Schizosaccharomyces pombe (strain 972 / ATCC 24843) (Fission yeast)).